Reading from the N-terminus, the 538-residue chain is Bifunctional purine biosynthesis protein PurH (538 aa).

The MGS-like domain occupies 8 to 158 (IPAPDKVEIK…KNHAYVTILT (151 aa)).

It belongs to the PurH family.

It carries out the reaction (6R)-10-formyltetrahydrofolate + 5-amino-1-(5-phospho-beta-D-ribosyl)imidazole-4-carboxamide = 5-formamido-1-(5-phospho-D-ribosyl)imidazole-4-carboxamide + (6S)-5,6,7,8-tetrahydrofolate. It catalyses the reaction IMP + H2O = 5-formamido-1-(5-phospho-D-ribosyl)imidazole-4-carboxamide. It functions in the pathway purine metabolism; IMP biosynthesis via de novo pathway; 5-formamido-1-(5-phospho-D-ribosyl)imidazole-4-carboxamide from 5-amino-1-(5-phospho-D-ribosyl)imidazole-4-carboxamide (10-formyl THF route): step 1/1. The protein operates within purine metabolism; IMP biosynthesis via de novo pathway; IMP from 5-formamido-1-(5-phospho-D-ribosyl)imidazole-4-carboxamide: step 1/1. The protein is Bifunctional purine biosynthesis protein PurH of Rhizobium etli (strain CIAT 652).